The primary structure comprises 235 residues: Enolase-phosphatase E1 (235 aa).

Belongs to the HAD-like hydrolase superfamily. MasA/MtnC family. Monomer. The cofactor is Mg(2+).

The enzyme catalyses 5-methylsulfanyl-2,3-dioxopentyl phosphate + H2O = 1,2-dihydroxy-5-(methylsulfanyl)pent-1-en-3-one + phosphate. Its pathway is amino-acid biosynthesis; L-methionine biosynthesis via salvage pathway; L-methionine from S-methyl-5-thio-alpha-D-ribose 1-phosphate: step 3/6. It functions in the pathway amino-acid biosynthesis; L-methionine biosynthesis via salvage pathway; L-methionine from S-methyl-5-thio-alpha-D-ribose 1-phosphate: step 4/6. Bifunctional enzyme that catalyzes the enolization of 2,3-diketo-5-methylthiopentyl-1-phosphate (DK-MTP-1-P) into the intermediate 2-hydroxy-3-keto-5-methylthiopentenyl-1-phosphate (HK-MTPenyl-1-P), which is then dephosphorylated to form the acireductone 1,2-dihydroxy-3-keto-5-methylthiopentene (DHK-MTPene). The sequence is that of Enolase-phosphatase E1 from Gluconacetobacter diazotrophicus (strain ATCC 49037 / DSM 5601 / CCUG 37298 / CIP 103539 / LMG 7603 / PAl5).